The sequence spans 56 residues: Small ribosomal subunit protein uS14 (56 aa).

4 residues coordinate Zn(2+): Cys-21, Cys-24, Cys-39, and Cys-42.

The protein belongs to the universal ribosomal protein uS14 family. In terms of assembly, component of the 40S small ribosomal subunit. It depends on Zn(2+) as a cofactor.

Its subcellular location is the cytoplasm. It localises to the cytosol. It is found in the rough endoplasmic reticulum. The polypeptide is Small ribosomal subunit protein uS14 (RpS29) (Bombyx mori (Silk moth)).